A 193-amino-acid chain; its full sequence is Potassium-transporting ATPase KdpC subunit (193 aa).

Residues 14–34 traverse the membrane as a helical segment; the sequence is ITFTFLVLCGLVYPLIVTGIA.

Belongs to the KdpC family. As to quaternary structure, the system is composed of three essential subunits: KdpA, KdpB and KdpC.

It is found in the cell membrane. In terms of biological role, part of the high-affinity ATP-driven potassium transport (or Kdp) system, which catalyzes the hydrolysis of ATP coupled with the electrogenic transport of potassium into the cytoplasm. This subunit acts as a catalytic chaperone that increases the ATP-binding affinity of the ATP-hydrolyzing subunit KdpB by the formation of a transient KdpB/KdpC/ATP ternary complex. The sequence is that of Potassium-transporting ATPase KdpC subunit from Bacillus mycoides (strain KBAB4) (Bacillus weihenstephanensis).